Here is a 476-residue protein sequence, read N- to C-terminus: Lactate utilization protein B (476 aa).

4Fe-4S ferredoxin-type domains lie at 304–334 and 353–382; these read GGEF…GHTY and YDDF…LHQL. Residues C313, C316, C319, C323, C366, C369, and C373 each contribute to the [4Fe-4S] cluster site. Residues 452-476 form a disordered region; that stretch reads RDFPAPNKNSFRNWMKHRTKGDEES.

It belongs to the LutB/YkgF family.

Its function is as follows. Is involved in L-lactate degradation and allows cells to grow with lactate as the sole carbon source. Has probably a role as an electron transporter during oxidation of L-lactate. This is Lactate utilization protein B from Lysinibacillus sphaericus (strain C3-41).